Consider the following 755-residue polypeptide: Polyribonucleotide nucleotidyltransferase (755 aa).

The Mg(2+) site is built by Asp-545 and Asp-551. The KH domain occupies 611–670 (PRITAITVPVNKIGEVIGPKGKTINSITEETGANISIEEDGTVYVSAASGAAAEAAIEKI). The S1 motif domain occupies 682-751 (GERFLGTVVK…NRGKISLAPV (70 aa)).

Belongs to the polyribonucleotide nucleotidyltransferase family. Mg(2+) is required as a cofactor.

It localises to the cytoplasm. It carries out the reaction RNA(n+1) + phosphate = RNA(n) + a ribonucleoside 5'-diphosphate. Functionally, involved in mRNA degradation. Catalyzes the phosphorolysis of single-stranded polyribonucleotides processively in the 3'- to 5'-direction. The polypeptide is Polyribonucleotide nucleotidyltransferase (Corynebacterium diphtheriae (strain ATCC 700971 / NCTC 13129 / Biotype gravis)).